The sequence spans 376 residues: Probable allantoicase (376 aa).

This sequence belongs to the allantoicase family.

The catalysed reaction is allantoate + H2O = (S)-ureidoglycolate + urea. It functions in the pathway nitrogen metabolism; (S)-allantoin degradation; (S)-ureidoglycolate from allantoate (aminidohydrolase route): step 1/1. This Streptomyces coelicolor (strain ATCC BAA-471 / A3(2) / M145) protein is Probable allantoicase.